We begin with the raw amino-acid sequence, 504 residues long: Signal transduction histidine-protein kinase/phosphatase MprB (504 aa).

The Cytoplasmic portion of the chain corresponds to 1–26 (MWWFRRRDRAPLRATSSLSLRWRVML). Residues 27–47 (LAMSMVAMVVVLMSFAVYAVI) form a helical membrane-spanning segment. The Extracellular portion of the chain corresponds to 48–163 (SAALYSDIDN…PTEAVMNKLR (116 aa)). A helical transmembrane segment spans residues 164–184 (WVLLIVGGIGVAVAAVAGGMV). The Cytoplasmic portion of the chain corresponds to 185-504 (TRAGLRPVGR…SVESQSTRAT (320 aa)). Residues 186-238 (RAGLRPVGRLTEAAERVARTDDLRPIPVFGSDELARLTEAFNLMLRALAESRE) form the HAMP domain. A Histidine kinase domain is found at 246 to 466 (DAGHELRTPL…SIYVLLPGRR (221 aa)). Histidine 249 is subject to Phosphohistidine; by autocatalysis. Positions 471 to 504 (QLPGATAGARSTDIENSRGSANVISVESQSTRAT) are disordered. Over residues 487 to 504 (SRGSANVISVESQSTRAT) the composition is skewed to polar residues.

Mg(2+) serves as cofactor. Requires Mn(2+) as cofactor. In terms of processing, autophosphorylated.

It is found in the cell membrane. It catalyses the reaction ATP + protein L-histidine = ADP + protein N-phospho-L-histidine.. Member of the two-component regulatory system MprB/MprA which contributes to maintaining a balance among several systems involved in stress resistance and is required for establishment and maintenance of persistent infection in the host. In response to environmental signals MprB acts both as a membrane-associated protein kinase that undergoes autophosphorylation and subsequently transfers the phosphate to MprA, and a protein phosphatase that dephosphorylates phospho-MprA. MprB/MprA up-regulates expression of mprA and pepD. The polypeptide is Signal transduction histidine-protein kinase/phosphatase MprB (mprB) (Mycobacterium bovis (strain ATCC BAA-935 / AF2122/97)).